The sequence spans 232 residues: (S)-2-haloacid dehalogenase (232 aa).

The active-site Nucleophile is the aspartate 10. Residues 11–12 (LY), arginine 41, and 118–119 (SN) contribute to the an (S)-2-haloacid site. The segment at 175–180 (SSNAWD) is important for catalytic activity.

It belongs to the HAD-like hydrolase superfamily. S-2-haloalkanoic acid dehalogenase family. As to quaternary structure, homodimer.

The enzyme catalyses an (S)-2-haloacid + H2O = a (2R)-2-hydroxycarboxylate + a halide anion + H(+). It carries out the reaction (S)-2-chloropropanoate + H2O = (R)-lactate + chloride + H(+). Catalyzes the hydrolytic dehalogenation of small (S)-2-haloalkanoic acids to yield the corresponding (R)-2-hydroxyalkanoic acids. Acts on acids of short chain lengths, C(2) to C(4), with inversion of configuration at C-2. Active with 2-halogenated carboxylic acids and converts only the S-isomer (or L-isomer) of 2-chloropropionic acid with inversion of configuration to produce R-lactate (or D-isomer). The polypeptide is (S)-2-haloacid dehalogenase (Pseudomonas sp. (strain YL)).